Consider the following 399-residue polypeptide: Probable dual-specificity RNA methyltransferase RlmN (399 aa).

Glu102 serves as the catalytic Proton acceptor. The Radical SAM core domain maps to 108–385 (YLDRATVCVS…CTVRVERGVA (278 aa)). An intrachain disulfide couples Cys115 to Cys390. [4Fe-4S] cluster contacts are provided by Cys122, Cys126, and Cys129. Residues 207-208 (GE), Ser239, 262-264 (SLH), and Asn347 contribute to the S-adenosyl-L-methionine site. The active-site S-methylcysteine intermediate is the Cys390.

Belongs to the radical SAM superfamily. RlmN family. Requires [4Fe-4S] cluster as cofactor.

The protein resides in the cytoplasm. It catalyses the reaction adenosine(2503) in 23S rRNA + 2 reduced [2Fe-2S]-[ferredoxin] + 2 S-adenosyl-L-methionine = 2-methyladenosine(2503) in 23S rRNA + 5'-deoxyadenosine + L-methionine + 2 oxidized [2Fe-2S]-[ferredoxin] + S-adenosyl-L-homocysteine. It carries out the reaction adenosine(37) in tRNA + 2 reduced [2Fe-2S]-[ferredoxin] + 2 S-adenosyl-L-methionine = 2-methyladenosine(37) in tRNA + 5'-deoxyadenosine + L-methionine + 2 oxidized [2Fe-2S]-[ferredoxin] + S-adenosyl-L-homocysteine. In terms of biological role, specifically methylates position 2 of adenine 2503 in 23S rRNA and position 2 of adenine 37 in tRNAs. The polypeptide is Probable dual-specificity RNA methyltransferase RlmN (Roseiflexus castenholzii (strain DSM 13941 / HLO8)).